A 175-amino-acid polypeptide reads, in one-letter code: ATP synthase subunit b (175 aa).

The helical transmembrane segment at Leu-20 to Trp-40 threads the bilayer.

This sequence belongs to the ATPase B chain family. In terms of assembly, F-type ATPases have 2 components, F(1) - the catalytic core - and F(0) - the membrane proton channel. F(1) has five subunits: alpha(3), beta(3), gamma(1), delta(1), epsilon(1). F(0) has four main subunits: a(1), b(2) and c(10-14). The alpha and beta chains form an alternating ring which encloses part of the gamma chain. F(1) is attached to F(0) by a central stalk formed by the gamma and epsilon chains, while a peripheral stalk is formed by the delta and b chains.

It localises to the cell inner membrane. F(1)F(0) ATP synthase produces ATP from ADP in the presence of a proton or sodium gradient. F-type ATPases consist of two structural domains, F(1) containing the extramembraneous catalytic core and F(0) containing the membrane proton channel, linked together by a central stalk and a peripheral stalk. During catalysis, ATP synthesis in the catalytic domain of F(1) is coupled via a rotary mechanism of the central stalk subunits to proton translocation. Functionally, component of the F(0) channel, it forms part of the peripheral stalk, linking F(1) to F(0). This chain is ATP synthase subunit b, found in Chlorobium limicola (strain DSM 245 / NBRC 103803 / 6330).